The sequence spans 152 residues: Small ribosomal subunit protein uS15 (152 aa).

The segment covering methionine 1–lysine 11 has biased composition (basic residues). Residues methionine 1–proline 22 form a disordered region.

The protein belongs to the universal ribosomal protein uS15 family. In terms of assembly, part of the 30S ribosomal subunit.

The protein is Small ribosomal subunit protein uS15 of Methanosarcina barkeri (strain Fusaro / DSM 804).